The following is a 272-amino-acid chain: 3-methyl-2-oxobutanoate hydroxymethyltransferase (272 aa).

Mg(2+) is bound by residues Asp43 and Asp82. Residues 43–44, Asp82, and Lys112 each bind 3-methyl-2-oxobutanoate; that span reads DS. A Mg(2+)-binding site is contributed by Glu114. The active-site Proton acceptor is Glu179.

Belongs to the PanB family. Homodecamer; pentamer of dimers. Mg(2+) serves as cofactor.

Its subcellular location is the cytoplasm. It catalyses the reaction 3-methyl-2-oxobutanoate + (6R)-5,10-methylene-5,6,7,8-tetrahydrofolate + H2O = 2-dehydropantoate + (6S)-5,6,7,8-tetrahydrofolate. It participates in cofactor biosynthesis; (R)-pantothenate biosynthesis; (R)-pantoate from 3-methyl-2-oxobutanoate: step 1/2. In terms of biological role, catalyzes the reversible reaction in which hydroxymethyl group from 5,10-methylenetetrahydrofolate is transferred onto alpha-ketoisovalerate to form ketopantoate. The protein is 3-methyl-2-oxobutanoate hydroxymethyltransferase of Staphylococcus aureus (strain bovine RF122 / ET3-1).